Here is a 604-residue protein sequence, read N- to C-terminus: Elongation factor 4 (604 aa).

In terms of domain architecture, tr-type G spans 8-190; sequence DKIRNFSIIA…AIVNRLPPPR (183 aa). GTP contacts are provided by residues 20–25 and 137–140; these read DHGKST and NKID.

It belongs to the TRAFAC class translation factor GTPase superfamily. Classic translation factor GTPase family. LepA subfamily.

It localises to the cell inner membrane. It carries out the reaction GTP + H2O = GDP + phosphate + H(+). Its function is as follows. Required for accurate and efficient protein synthesis under certain stress conditions. May act as a fidelity factor of the translation reaction, by catalyzing a one-codon backward translocation of tRNAs on improperly translocated ribosomes. Back-translocation proceeds from a post-translocation (POST) complex to a pre-translocation (PRE) complex, thus giving elongation factor G a second chance to translocate the tRNAs correctly. Binds to ribosomes in a GTP-dependent manner. This Hyphomonas neptunium (strain ATCC 15444) protein is Elongation factor 4.